A 112-amino-acid polypeptide reads, in one-letter code: UPF0342 protein SPT_0901 (112 aa).

Belongs to the UPF0342 family.

The polypeptide is UPF0342 protein SPT_0901 (Streptococcus pneumoniae (strain Taiwan19F-14)).